Here is a 322-residue protein sequence, read N- to C-terminus: tRNA-specific adenosine deaminase subunit TAD3 (322 aa).

A CMP/dCMP-type deaminase domain is found at 162-283; the sequence is EVRNELSRAS…EMQRTGSLKL (122 aa). Zn(2+) contacts are provided by His-216, Cys-254, Cys-257, and Cys-322.

It belongs to the cytidine and deoxycytidylate deaminase family. ADAT3 subfamily. As to quaternary structure, heterodimer with TAD2.

The protein resides in the cytoplasm. Its subcellular location is the nucleus. The protein localises to the peroxisome. Structural subunit of tRNA-specific adenosine deaminase, which deaminates adenosine-34 (the first, also called wobble position of the anticodon) to inosine in many tRNAs. Inosine-34 allows the decoding of 3 different nucleotides at the third position of mRNA codons, as inosine is able to pair with U, C, and A. The polypeptide is tRNA-specific adenosine deaminase subunit TAD3 (TAD3) (Saccharomyces cerevisiae (strain ATCC 204508 / S288c) (Baker's yeast)).